The primary structure comprises 426 residues: 4-hydroxy-3-methylbut-2-en-1-yl diphosphate synthase (flavodoxin) (426 aa).

[4Fe-4S] cluster contacts are provided by Cys310, Cys313, Cys356, and Glu363.

The protein belongs to the IspG family. [4Fe-4S] cluster is required as a cofactor.

The catalysed reaction is (2E)-4-hydroxy-3-methylbut-2-enyl diphosphate + oxidized [flavodoxin] + H2O + 2 H(+) = 2-C-methyl-D-erythritol 2,4-cyclic diphosphate + reduced [flavodoxin]. It participates in isoprenoid biosynthesis; isopentenyl diphosphate biosynthesis via DXP pathway; isopentenyl diphosphate from 1-deoxy-D-xylulose 5-phosphate: step 5/6. In terms of biological role, converts 2C-methyl-D-erythritol 2,4-cyclodiphosphate (ME-2,4cPP) into 1-hydroxy-2-methyl-2-(E)-butenyl 4-diphosphate. The chain is 4-hydroxy-3-methylbut-2-en-1-yl diphosphate synthase (flavodoxin) from Rhodopseudomonas palustris (strain BisA53).